A 509-amino-acid polypeptide reads, in one-letter code: Lysine--tRNA ligase (509 aa).

The segment covering 1-18 (MSEQNPTQAAKQAPQQEL) has biased composition (polar residues). The disordered stretch occupies residues 1 to 20 (MSEQNPTQAAKQAPQQELND). 2 residues coordinate Mg(2+): Glu-418 and Glu-425.

This sequence belongs to the class-II aminoacyl-tRNA synthetase family. Homodimer. Requires Mg(2+) as cofactor.

Its subcellular location is the cytoplasm. It carries out the reaction tRNA(Lys) + L-lysine + ATP = L-lysyl-tRNA(Lys) + AMP + diphosphate. This Psychromonas ingrahamii (strain DSM 17664 / CCUG 51855 / 37) protein is Lysine--tRNA ligase.